Consider the following 515-residue polypeptide: Maturase K (515 aa).

It belongs to the intron maturase 2 family. MatK subfamily.

Its subcellular location is the plastid. It localises to the chloroplast. Usually encoded in the trnK tRNA gene intron. Probably assists in splicing its own and other chloroplast group II introns. This is Maturase K from Picea engelmannii (Engelmann's spruce).